Consider the following 351-residue polypeptide: Transaldolase (351 aa).

Lys138 functions as the Schiff-base intermediate with substrate in the catalytic mechanism.

It belongs to the transaldolase family. Type 2 subfamily.

It is found in the cytoplasm. It carries out the reaction D-sedoheptulose 7-phosphate + D-glyceraldehyde 3-phosphate = D-erythrose 4-phosphate + beta-D-fructose 6-phosphate. Its pathway is carbohydrate degradation; pentose phosphate pathway; D-glyceraldehyde 3-phosphate and beta-D-fructose 6-phosphate from D-ribose 5-phosphate and D-xylulose 5-phosphate (non-oxidative stage): step 2/3. Its function is as follows. Transaldolase is important for the balance of metabolites in the pentose-phosphate pathway. The polypeptide is Transaldolase (Neisseria gonorrhoeae (strain ATCC 700825 / FA 1090)).